The following is a 794-amino-acid chain: FT-interacting protein 1 (794 aa).

Residues 1–27 (MAAKDGAKSQEDYKLKDMKPELGERWP) show a composition bias toward basic and acidic residues. The disordered stretch occupies residues 1–34 (MAAKDGAKSQEDYKLKDMKPELGERWPHGGQRGG). 3 consecutive C2 domains span residues 37–158 (WIGS…PQWY), 198–321 (VQGE…SKWY), and 364–492 (YISD…THSY). Ca(2+)-binding residues include Asp-76, Asp-123, Glu-125, and Glu-131. The next 4 helical transmembrane spans lie at 510–532 (LAVRFTCLSLAHMIYLYGHPLLP), 595–615 (IVSVFAGLIAMSKWLGDVCYW), 619–639 (LTTILFHVLFFILICYPELIL), and 737–757 (LFVIFCLVAAMILYVTPFKII).

It belongs to the MCTP family. As to quaternary structure, interacts with FT in phloem companion cells. Ca(2+) is required as a cofactor. As to expression, expressed in the vascular tissues of roots, cotyledons and rosette leaves. Specifically located in the phloem including companion cells. Observed in flowers. Not detected in the shoot apical meristem.

The protein localises to the endoplasmic reticulum membrane. It is found in the cell junction. The protein resides in the plasmodesma. In terms of biological role, involved in the export of FT from the phloem companion cells to the sieve elements through the plasmodesmata. Regulates flowering time under long days. May function as a signaling molecule by regulating the trafficking of other regulators. The chain is FT-interacting protein 1 from Arabidopsis thaliana (Mouse-ear cress).